Here is a 460-residue protein sequence, read N- to C-terminus: Probable fibrosin-1 (460 aa).

Lys-8 is covalently cross-linked (Glycyl lysine isopeptide (Lys-Gly) (interchain with G-Cter in SUMO2)). Disordered stretches follow at residues 40–79, 205–311, and 406–460; these read SLQGAFQPKSTNPELPPRLGPVPSGLSQKGTQIPDHFRPP, FAQK…KEEA, and YSRL…RADR. Over residues 212–223 the composition is skewed to pro residues; it reads GAPPAFASPPDP. 2 positions are modified to asymmetric dimethylarginine: Arg-229 and Arg-239. A compositionally biased stretch (basic and acidic residues) spans 248–272; the sequence is GSDKERPVERREPSITKEEKDRDLP. Residue Ser-281 is modified to Phosphoserine. The span at 288–311 shows a compositional bias: basic and acidic residues; the sequence is RAGEEGPRPTKESVRVKEERKEEA. The segment covering 436–453 has biased composition (pro residues); sequence APPPLVPAPRPSSPPRGP.

The sequence is that of Probable fibrosin-1 (FBRS) from Homo sapiens (Human).